The sequence spans 415 residues: ASMFKHDHYMDNGVRYPNGDGICEQLNETKCDAGFSYDRSICEGPHYWHTISKCFIACGIGQRQSPINIVSYDAKFRQRLPKLKFKPHMEKLKTEVTNHQNRAPEFEPEDGENLYVKLNNLVDGHYKFHNLHVHNGRTRRKGSEHSVNGRFTPMEAHLVFHHDEQTHFEPTRTKLGGAFPGHNDFVVVGVFLEVGDDGFGDEPDDEECKHILKGHHPDNNENGNGDNGNNGYNGDNGNNGDNGNNGYNGDNGNNGVNGNNGYNGDNGNNGDNGNNGENGNNGENGNNGENGHKHGCRVKKAKHLSRILECAYRNDKVREFKKVGEEEGLDVHLTPEMPLPPLKYRHYYTYEGSLTTPPCTESVLWVVQKCHVQVSRRVLHALRNVEGYKDGTTLRKYGTRRPTQKNKVTVYKSFK.

A glycan (N-linked (GlcNAc...) asparagine) is linked at asparagine 27. Residues 33–414 form the Alpha-carbonic anhydrase domain; it reads AGFSYDRSIC…KNKVTVYKSF (382 aa). Zn(2+) contacts are provided by histidine 132, histidine 134, and histidine 157. The tract at residues 201–297 is disordered; the sequence is DEPDDEECKH…GENGHKHGCR (97 aa). A compositionally biased stretch (basic and acidic residues) spans 207–219; the sequence is ECKHILKGHHPDN. Residues 220 to 289 show a composition bias toward low complexity; sequence NENGNGDNGN…NNGENGNNGE (70 aa). Repeat copies occupy residues 225 to 227, 228 to 230, 231 to 233, 234 to 236, 237 to 239, 240 to 242, 243 to 245, 246 to 248, 249 to 251, 252 to 254, 255 to 257, 258 to 260, 261 to 263, 264 to 266, 267 to 269, 270 to 272, 273 to 275, 276 to 278, 279 to 281, 282 to 284, 285 to 286, and 288 to 290. The tract at residues 225 to 290 is 27 X 3 AA approximate tandem repeats of G-X-N; that stretch reads GDNGNNGYNG…NGENGNNGEN (66 aa). Residue 355–356 participates in substrate binding; it reads TT.

It belongs to the alpha-carbonic anhydrase family. In terms of assembly, homooligomer; disulfide-linked. May also be disulfide-linked to insoluble organic matrix. Requires Zn(2+) as cofactor. Expressed in the mantle.

The protein localises to the secreted. It is found in the extracellular space. It localises to the extracellular matrix. It catalyses the reaction hydrogencarbonate + H(+) = CO2 + H2O. In terms of biological role, acts as a negative regulator for calcification in the shells of mollusks. May function both as a calcium concentrator and as a carbonic anhydrase required for production of carbonate ions, which are assembled to CaCO(3) at mineralization sites. Is important for shell formation in both the calcitic prismatic layer and the aragonitic nacreous layer. Shows inhibitory activity of crystal formation when present in free state but, when attached to the insoluble matrix, may regulate the form and size of aragonite crystal. The protein is Nacrein-like protein C2 of Crassostrea nippona (Iwagaki oyster).